The primary structure comprises 288 residues: Bifunctional protein FolD (288 aa).

NADP(+) contacts are provided by residues 166-168 (GAS) and Ile232.

It belongs to the tetrahydrofolate dehydrogenase/cyclohydrolase family. In terms of assembly, homodimer.

It catalyses the reaction (6R)-5,10-methylene-5,6,7,8-tetrahydrofolate + NADP(+) = (6R)-5,10-methenyltetrahydrofolate + NADPH. The catalysed reaction is (6R)-5,10-methenyltetrahydrofolate + H2O = (6R)-10-formyltetrahydrofolate + H(+). It functions in the pathway one-carbon metabolism; tetrahydrofolate interconversion. Its function is as follows. Catalyzes the oxidation of 5,10-methylenetetrahydrofolate to 5,10-methenyltetrahydrofolate and then the hydrolysis of 5,10-methenyltetrahydrofolate to 10-formyltetrahydrofolate. The polypeptide is Bifunctional protein FolD (Klebsiella pneumoniae (strain 342)).